The sequence spans 98 residues: Integration host factor subunit alpha (98 aa).

A disordered region spans residues 52-73; sequence FDLRQKSERPGRNPKTGEDIPI. A compositionally biased stretch (basic and acidic residues) spans 54–73; sequence LRQKSERPGRNPKTGEDIPI.

The protein belongs to the bacterial histone-like protein family. Heterodimer of an alpha and a beta chain.

This protein is one of the two subunits of integration host factor, a specific DNA-binding protein that functions in genetic recombination as well as in transcriptional and translational control. In Pseudoalteromonas atlantica (strain T6c / ATCC BAA-1087), this protein is Integration host factor subunit alpha.